The sequence spans 555 residues: MFS-type transporter VdtG (555 aa).

The segment at 1 to 20 (MNGNGTADKPGPPGGKPFGP) is disordered. The N-linked (GlcNAc...) asparagine glycan is linked to asparagine 4. 3 helical membrane-spanning segments follow: residues 30 to 50 (TGFK…LTAL), 71 to 91 (DIGW…LLFG), and 101 to 121 (WVFL…GAAP). Residue asparagine 122 is glycosylated (N-linked (GlcNAc...) asparagine). The next 2 helical transmembrane spans lie at 132 to 152 (IAGL…FFTV) and 162 to 182 (GIAG…GGGF). The N-linked (GlcNAc...) asparagine glycan is linked to asparagine 185. Helical transmembrane passes span 190 to 210 (WCFY…LLFL), 232 to 252 (LGNL…QWGG), 262 to 282 (IVAL…VQLW), and 304 to 324 (AFTI…PIWF). The N-linked (GlcNAc...) asparagine glycan is linked to asparagine 329. 5 helical membrane-spanning segments follow: residues 337–357 (VMML…GFII), 364–384 (TPFM…LTTF), 393–413 (WIGY…QASL), 425–445 (PIGI…FLAV), and 497–517 (LMDV…AAAF). Residues 528–555 (AAGPGGPGGPGGPGGPGGPEGLRGGNKV) form a disordered region. Residues 530-555 (GPGGPGGPGGPGGPGGPEGLRGGNKV) show a composition bias toward gly residues.

Belongs to the major facilitator superfamily. TCR/Tet family.

The protein localises to the endoplasmic reticulum membrane. Functionally, MFS-type transporter; part of the gene cluster that mediates the biosynthesis of viriditoxin, one of the 'classical' secondary metabolites produced by fungi and that has antibacterial activity. Is not essential for viriditoxin production. The chain is MFS-type transporter VdtG from Byssochlamys spectabilis (Paecilomyces variotii).